Consider the following 440-residue polypeptide: tRNA modification GTPase MnmE (440 aa).

Residues arginine 34, glutamate 94, and arginine 134 each coordinate (6S)-5-formyl-5,6,7,8-tetrahydrofolate. Residues 229-367 form the TrmE-type G domain; the sequence is GVRVVLAGPP…LVALLLDRAA (139 aa). Asparagine 239 contacts K(+). GTP-binding positions include 239-244, 258-264, 283-286, and 348-350; these read NAGKST, TPIAGTT, DTAG, and SAR. Serine 243 is a binding site for Mg(2+). 3 residues coordinate K(+): threonine 258, isoleucine 260, and threonine 263. Residue threonine 264 coordinates Mg(2+). Lysine 440 contributes to the (6S)-5-formyl-5,6,7,8-tetrahydrofolate binding site.

This sequence belongs to the TRAFAC class TrmE-Era-EngA-EngB-Septin-like GTPase superfamily. TrmE GTPase family. Homodimer. Heterotetramer of two MnmE and two MnmG subunits. Requires K(+) as cofactor.

The protein localises to the cytoplasm. In terms of biological role, exhibits a very high intrinsic GTPase hydrolysis rate. Involved in the addition of a carboxymethylaminomethyl (cmnm) group at the wobble position (U34) of certain tRNAs, forming tRNA-cmnm(5)s(2)U34. This is tRNA modification GTPase MnmE from Rhizorhabdus wittichii (strain DSM 6014 / CCUG 31198 / JCM 15750 / NBRC 105917 / EY 4224 / RW1) (Sphingomonas wittichii).